The primary structure comprises 157 residues: Protein Smg homolog (157 aa).

The protein belongs to the Smg family.

In Aeromonas salmonicida (strain A449), this protein is Protein Smg homolog.